Consider the following 96-residue polypeptide: Small ribosomal subunit protein bS6 (96 aa).

It belongs to the bacterial ribosomal protein bS6 family.

Functionally, binds together with bS18 to 16S ribosomal RNA. The protein is Small ribosomal subunit protein bS6 of Mycolicibacterium paratuberculosis (strain ATCC BAA-968 / K-10) (Mycobacterium paratuberculosis).